Consider the following 277-residue polypeptide: Carbonyl reductase [NADPH] 3 (277 aa).

Position 2 is an N-acetylserine (Ser-2). Residues 10 to 34 (VTGANKGIGFAITRDLCRKFSGDVV), 38 to 42 (RDEAR), 63 to 64 (DI), and Asn-90 each bind NADP(+). Ser-30 is modified (phosphoserine). Ser-140 is a binding site for substrate. Tyr-194 serves as the catalytic Proton acceptor. 194-198 (YGVSK) lines the NADP(+) pocket.

It belongs to the short-chain dehydrogenases/reductases (SDR) family.

It is found in the cytoplasm. The enzyme catalyses a secondary alcohol + NADP(+) = a ketone + NADPH + H(+). The catalysed reaction is a quinone + NADPH + H(+) = a quinol + NADP(+). Functionally, catalyzes the NADPH-dependent reduction of carbonyl compounds to their corresponding alcohols. Has low NADPH-dependent oxidoreductase activity. Acts on several orthoquinones, as well as on non-quinone compounds, such as isatin or on the anticancer drug oracin. Best substrates for CBR3 is 1,2- naphthoquinone, hence could play a role in protection against cytotoxicity of exogenous quinones. Exerts activity toward ortho-quinones but not paraquinones. No endogenous substrate for CBR3 except isatin has been identified. The chain is Carbonyl reductase [NADPH] 3 (Cbr3) from Mus musculus (Mouse).